The chain runs to 316 residues: Transaldolase (316 aa).

The active-site Schiff-base intermediate with substrate is the K132.

It belongs to the transaldolase family. Type 1 subfamily.

Its subcellular location is the cytoplasm. The catalysed reaction is D-sedoheptulose 7-phosphate + D-glyceraldehyde 3-phosphate = D-erythrose 4-phosphate + beta-D-fructose 6-phosphate. The protein operates within carbohydrate degradation; pentose phosphate pathway; D-glyceraldehyde 3-phosphate and beta-D-fructose 6-phosphate from D-ribose 5-phosphate and D-xylulose 5-phosphate (non-oxidative stage): step 2/3. In terms of biological role, transaldolase is important for the balance of metabolites in the pentose-phosphate pathway. This Vibrio cholerae serotype O1 (strain ATCC 39315 / El Tor Inaba N16961) protein is Transaldolase.